The chain runs to 262 residues: Small ribosomal subunit protein eS4C (262 aa).

The S4 RNA-binding domain occupies 42-105; it reads LPLIVFLRNR…GEHFRLVYDI (64 aa). T194 carries the post-translational modification Phosphothreonine.

Belongs to the eukaryotic ribosomal protein eS4 family. Component of the small ribosomal subunit (SSU). Mature yeast ribosomes consist of a small (40S) and a large (60S) subunit. The 40S small subunit contains 1 molecule of ribosomal RNA (18S rRNA) and at least 33 different proteins. The large 60S subunit contains 3 rRNA molecules (25S, 5.8S and 5S rRNA) and at least 46 different proteins.

Its subcellular location is the cytoplasm. Its function is as follows. Component of the ribosome, a large ribonucleoprotein complex responsible for the synthesis of proteins in the cell. The small ribosomal subunit (SSU) binds messenger RNAs (mRNAs) and translates the encoded message by selecting cognate aminoacyl-transfer RNA (tRNA) molecules. The large subunit (LSU) contains the ribosomal catalytic site termed the peptidyl transferase center (PTC), which catalyzes the formation of peptide bonds, thereby polymerizing the amino acids delivered by tRNAs into a polypeptide chain. The nascent polypeptides leave the ribosome through a tunnel in the LSU and interact with protein factors that function in enzymatic processing, targeting, and the membrane insertion of nascent chains at the exit of the ribosomal tunnel. The polypeptide is Small ribosomal subunit protein eS4C (rps403) (Schizosaccharomyces pombe (strain 972 / ATCC 24843) (Fission yeast)).